Reading from the N-terminus, the 198-residue chain is Linker for activation of T-cells family member 2 (198 aa).

At 1-4 (MAQP) the chain is on the extracellular side. The chain crosses the membrane as a helical; Signal-anchor for type III membrane protein span at residues 5 to 24 (ELLWAAAGLMLLGVAVSACV). S-palmitoyl cysteine attachment occurs at residues cysteine 23 and cysteine 26. The Cytoplasmic portion of the chain corresponds to 25–198 (RCQLYATKRG…PTIDAVVLSK (174 aa)). Tyrosine 136, tyrosine 155, and tyrosine 184 each carry phosphotyrosine.

As to quaternary structure, when phosphorylated, interacts with GRB2. In terms of processing, phosphorylated on tyrosines following cross-linking of BCR; which induces the recruitment of GRB2.

It is found in the cell membrane. Functionally, involved in BCR (B-cell antigen receptor)-mediated signaling in B-cells. May also be involved in FCER1 (high affinity immunoglobulin epsilon receptor)-mediated signaling in mast cells and FCGR1 (high affinity immunoglobulin gamma Fc receptor I)-mediated signaling in myeloid cells. Couples activation of these receptors and their associated kinases with distal intracellular events such as calcium mobilization through the recruitment of GRB2. The chain is Linker for activation of T-cells family member 2 (LAT2) from Gallus gallus (Chicken).